Here is a 219-residue protein sequence, read N- to C-terminus: Small ribosomal subunit protein uS3c (219 aa).

In terms of domain architecture, KH type-2 spans 43–120; it reads IQNYIQKNMQ…KINITITKIT (78 aa).

Belongs to the universal ribosomal protein uS3 family. Part of the 30S ribosomal subunit.

Its subcellular location is the plastid. It localises to the chloroplast. The protein is Small ribosomal subunit protein uS3c (rps3) of Oenothera elata subsp. hookeri (Hooker's evening primrose).